The primary structure comprises 89 residues: MSITAERKQELIAEYATKENDTGSPEVQVAILTERINNLTDHLRGHNKDHHSRRGLLKMVGLRRRLLSYVQKEDRSRYQDLIKRLGLRK.

It belongs to the universal ribosomal protein uS15 family. Part of the 30S ribosomal subunit. Forms a bridge to the 50S subunit in the 70S ribosome, contacting the 23S rRNA.

One of the primary rRNA binding proteins, it binds directly to 16S rRNA where it helps nucleate assembly of the platform of the 30S subunit by binding and bridging several RNA helices of the 16S rRNA. Functionally, forms an intersubunit bridge (bridge B4) with the 23S rRNA of the 50S subunit in the ribosome. The chain is Small ribosomal subunit protein uS15 from Magnetococcus marinus (strain ATCC BAA-1437 / JCM 17883 / MC-1).